The following is a 122-amino-acid chain: Large ribosomal subunit protein uL14 (122 aa).

This sequence belongs to the universal ribosomal protein uL14 family. As to quaternary structure, part of the 50S ribosomal subunit. Forms a cluster with proteins L3 and L19. In the 70S ribosome, L14 and L19 interact and together make contacts with the 16S rRNA in bridges B5 and B8.

Functionally, binds to 23S rRNA. Forms part of two intersubunit bridges in the 70S ribosome. The chain is Large ribosomal subunit protein uL14 from Rhodopirellula baltica (strain DSM 10527 / NCIMB 13988 / SH1).